A 211-amino-acid chain; its full sequence is MKVTAAFAGLLVTALAAPAPEPVLVSRSAGINYVQNYNGNLGDFTYDESAGTFSMYWEDGVSSDFVVGLGWTTGSSNPITYSADYSASGSSSYLAVYGWDNYPQAEYYIVEDYGDYNPCSSATSLGTVYSDGSTYQVCTDTRTNEPSITGTSTFTQYFSVRESTRTSGTVTVANHFNFWAQHGFGNSDFNYQVVAVEAWSGAGSASVTISS.

The N-terminal stretch at 1 to 16 (MKVTAAFAGLLVTALA) is a signal peptide. Positions 19 to 210 (APEPVLVSRS…GAGSASVTIS (192 aa)) constitute a GH11 domain. Residue E106 is the Nucleophile of the active site. E197 functions as the Proton donor in the catalytic mechanism.

This sequence belongs to the glycosyl hydrolase 11 (cellulase G) family.

It is found in the secreted. The enzyme catalyses Endohydrolysis of (1-&gt;4)-beta-D-xylosidic linkages in xylans.. It participates in glycan degradation; xylan degradation. Its function is as follows. Endo-1,4-beta-xylanase involved in the hydrolysis of xylan, a major structural heterogeneous polysaccharide found in plant biomass representing the second most abundant polysaccharide in the biosphere, after cellulose. This chain is Endo-1,4-beta-xylanase 6 (XYN6), found in Aspergillus niger.